A 491-amino-acid chain; its full sequence is MDRKTMTISAWRQQLQNGDISSRELVDQHIERLETAEPSLSVYNEITVERARADADRIDAARAAGESLGPLAGLPLAIKDNLCTRGVRTTCSSRMLEHFVPPYESTATERLWQAGGVLVGKTNLDEFAMGGSTETSAFGATHNPWNLDHVPGGSSGGSAAAVASGSCIASLGSDTGGSIRQPASFCGVVGLKPTYGRVSRWGLVAFASSLDQVGPFATSVADAAELLQVIAGPDPRDSTCLNVEVPDYSAGLNQSIKGLKVGVIKECFDAKGLDGEVNASVRAAAAQLEALGAELVEVSCPRFNDGIATYYVIAPSEASANLARYDGVKYGFRAADAESLATMTSSSRAEGFGEEVQRRILIGTYALSAGYVDAYYKKAQQVRTLIRRDFDAAFQSVDVLLTPTAPSPAFKAGAHKDDPLAMYLADLLTIPVNLAGLPAISVPCGFSQTGLPIGVQLIGNVLDEARLLQVAHQYEQAADVLSQRPKAPLVP.

Active-site charge relay system residues include Lys-79 and Ser-154. Ser-178 (acyl-ester intermediate) is an active-site residue.

This sequence belongs to the amidase family. GatA subfamily. Heterotrimer of A, B and C subunits.

It catalyses the reaction L-glutamyl-tRNA(Gln) + L-glutamine + ATP + H2O = L-glutaminyl-tRNA(Gln) + L-glutamate + ADP + phosphate + H(+). Allows the formation of correctly charged Gln-tRNA(Gln) through the transamidation of misacylated Glu-tRNA(Gln) in organisms which lack glutaminyl-tRNA synthetase. The reaction takes place in the presence of glutamine and ATP through an activated gamma-phospho-Glu-tRNA(Gln). This is Glutamyl-tRNA(Gln) amidotransferase subunit A from Synechococcus sp. (strain CC9902).